The primary structure comprises 315 residues: Olfactory receptor 8J3 (315 aa).

Over 1–25 (MAPENFTRVTEFILTGVSSCPELQI) the chain is Extracellular. A glycan (N-linked (GlcNAc...) asparagine) is linked at asparagine 5. A helical transmembrane segment spans residues 26-46 (PLFLVFLVLYVLTMAGNLGII). Topologically, residues 47–54 (TLTSVDSR) are cytoplasmic. The helical transmembrane segment at 55 to 75 (LQNPMYFFLRHLAIINLGNST) threads the bilayer. Residues 76–99 (VIAPKMLMNFLVKKKTTSFYECAT) lie on the Extracellular side of the membrane. A disulfide bridge connects residues cysteine 97 and cysteine 189. Residues 100-120 (QLGGFLFFIVSEVMMLAVMAY) traverse the membrane as a helical segment. At 121–139 (DRYVAICNPLLYMVVVSRR) the chain is on the cytoplasmic side. A helical transmembrane segment spans residues 140–160 (LCLLLVSLTYLYGFSTAIVVS). Topologically, residues 161-197 (PCIFSVSYCSSNIINHFYCDIAPLLALSCSDTYIPET) are extracellular. A helical transmembrane segment spans residues 198 to 217 (IVFISAATNLVFSMITVLVS). Over 218 to 237 (YFNIVLSILRIRSPEGRKKA) the chain is Cytoplasmic. The helical transmembrane segment at 238–258 (FSTCASHMIAVTVFYGTMLFM) threads the bilayer. At 259 to 271 (YLQPQTNHSLDTD) the chain is on the extracellular side. N-linked (GlcNAc...) asparagine glycosylation is present at asparagine 265. Residues 272–292 (KMASVFYTLVIPMLNPLIYSL) form a helical membrane-spanning segment. Residues 293 to 315 (RNNDVNVALKKFMENPCYSFKSM) lie on the Cytoplasmic side of the membrane.

The protein belongs to the G-protein coupled receptor 1 family.

The protein resides in the cell membrane. In terms of biological role, odorant receptor. The chain is Olfactory receptor 8J3 (OR8J3) from Homo sapiens (Human).